The following is a 617-amino-acid chain: Dihydroxy-acid dehydratase (617 aa).

Position 81 (aspartate 81) interacts with Mg(2+). Cysteine 122 contributes to the [2Fe-2S] cluster binding site. Residues aspartate 123 and lysine 124 each contribute to the Mg(2+) site. Lysine 124 is subject to N6-carboxylysine. Residue cysteine 195 coordinates [2Fe-2S] cluster. Residue glutamate 491 participates in Mg(2+) binding. Catalysis depends on serine 517, which acts as the Proton acceptor.

It belongs to the IlvD/Edd family. As to quaternary structure, homodimer. It depends on [2Fe-2S] cluster as a cofactor. Mg(2+) serves as cofactor.

The catalysed reaction is (2R)-2,3-dihydroxy-3-methylbutanoate = 3-methyl-2-oxobutanoate + H2O. It catalyses the reaction (2R,3R)-2,3-dihydroxy-3-methylpentanoate = (S)-3-methyl-2-oxopentanoate + H2O. Its pathway is amino-acid biosynthesis; L-isoleucine biosynthesis; L-isoleucine from 2-oxobutanoate: step 3/4. It participates in amino-acid biosynthesis; L-valine biosynthesis; L-valine from pyruvate: step 3/4. Functions in the biosynthesis of branched-chain amino acids. Catalyzes the dehydration of (2R,3R)-2,3-dihydroxy-3-methylpentanoate (2,3-dihydroxy-3-methylvalerate) into 2-oxo-3-methylpentanoate (2-oxo-3-methylvalerate) and of (2R)-2,3-dihydroxy-3-methylbutanoate (2,3-dihydroxyisovalerate) into 2-oxo-3-methylbutanoate (2-oxoisovalerate), the penultimate precursor to L-isoleucine and L-valine, respectively. The protein is Dihydroxy-acid dehydratase of Buchnera aphidicola subsp. Acyrthosiphon pisum (strain 5A).